The sequence spans 374 residues: UPF0496 protein At4g34320 (374 aa).

The next 2 helical transmembrane spans lie at 215–235 and 238–258; these read IIFVATFATVLICSVVAAAMA and PVAAALAAATAVPLGSMGKWI.

This sequence belongs to the UPF0496 family.

Its subcellular location is the membrane. The chain is UPF0496 protein At4g34320 from Arabidopsis thaliana (Mouse-ear cress).